Consider the following 160-residue polypeptide: MPSFDVVSEVDMQELRNAVDQTQREIDTRYDFKGTAAAIELNEMELTLFGDAEFQVEQVMDILVQKIAKRGIDVGCLEPGKLEEGGGKARRVVKVLAGIETDTARKIVKLIKEAKLKVQAAIQGDKVRVTGKKRDDLQEVIALLRQADVGLPLQYNNFRD.

The protein belongs to the YajQ family.

Functionally, nucleotide-binding protein. This is Nucleotide-binding protein Tgr7_1196 from Thioalkalivibrio sulfidiphilus (strain HL-EbGR7).